Here is a 1317-residue protein sequence, read N- to C-terminus: Nucleoporin NUP145 (1317 aa).

The segment covering 1–16 has biased composition (polar residues); the sequence is MFNKSVNSGFTFGNQN. Positions 1–36 are disordered; sequence MFNKSVNSGFTFGNQNTSTPTSTPAQPSSSLQFPQK. One copy of the FG 1 repeat lies at 12 to 13; the sequence is FG. The segment covering 17–30 has biased composition (low complexity); sequence TSTPTSTPAQPSSS. Residues 39 to 42 form a GLFG 1 repeat; it reads GLFG. An FG 2 repeat occupies 79–80; sequence FG. The stretch at 89-92 is one GLFG 2 repeat; the sequence is GLFG. Residues 106 to 107 form an FG 3 repeat; that stretch reads FG. Residues 133-165 form a disordered region; the sequence is QNGGLFGNSNNNNITSTTQNGGLFGKPTTTPAG. 4 GLFG repeats span residues 136–139, 154–157, 168–171, and 181–184; these read GLFG. The segment covering 139 to 164 has biased composition (low complexity); that stretch reads GNSNNNNITSTTQNGGLFGKPTTTPA. A GLFG 7; approximate repeat occupies 193–196; it reads GIFG. A GLFG 8 repeat occupies 206-209; the sequence is GLFG. The disordered stretch occupies residues 249 to 278; the sequence is TSSLSDVNGKSDAEPKPIENRRTYSFSSSV. The span at 257 to 270 shows a compositional bias: basic and acidic residues; it reads GKSDAEPKPIENRR. Ser273 is modified (phosphoserine). Residues 369-385 carry the Bipartite nuclear localization signal motif; the sequence is RKLKIDSNRSAAKKLKL. Positions 390 to 450 are disordered; sequence PAITKKHMQD…NLNKQDGENT (61 aa). The segment at 398-523 is required for autocatalytic cleavage; that stretch reads QDEQDSSENE…FGKIVIFRSS (126 aa). A phosphoserine mark is found at Ser403, Ser404, and Ser414. Basic and acidic residues predominate over residues 418–427; sequence IDRKENRDNN. Residues 428–444 show a composition bias toward polar residues; sequence LDNTYLNGKEQSNNLNK. Residues 458–605 enclose the Peptidase S59 domain; it reads SFGYWCSPSP…GTWTFKVNHF (148 aa). The nucleoporin RNA-binding motif (NRM) stretch occupies residues 460–604; it reads GYWCSPSPEQ…GGTWTFKVNH (145 aa). Residues Ser667, Ser679, and Ser689 each carry the phosphoserine modification. The residue at position 751 (Thr751) is a Phosphothreonine.

Belongs to the nucleoporin GLFG family. In terms of assembly, component of the nuclear pore complex (NPC). NPC constitutes the exclusive means of nucleocytoplasmic transport. NPCs allow the passive diffusion of ions and small molecules and the active, nuclear transport receptor-mediated bidirectional transport of macromolecules such as proteins, RNAs, ribonucleoparticles (RNPs), and ribosomal subunits across the nuclear envelope. Due to its 8-fold rotational symmetry, all subunits are present with 8 copies or multiples thereof. NUP145C is part of the heptameric 0.5 MDa autoassembling NUP84 NPC subcomplex (NUP84, NUP85, NUP120, NUP133, NUP145C, SEC13 and SEH1). NUP145N may bind homomeric RNA and interacts through its FG repeats with karyopherins. Interacts with MLP1 and MLP2. NUP145 is autocatalytically cleaved in NUP145N and NUP145C.

Its subcellular location is the nucleus. It localises to the nuclear pore complex. It is found in the nucleus membrane. Functions as a component of the nuclear pore complex (NPC). NPC components, collectively referred to as nucleoporins (NUPs), can play the role of both NPC structural components and of docking or interaction partners for transiently associated nuclear transport factors. Active directional transport is assured by both, a Phe-Gly (FG) repeat affinity gradient for these transport factors across the NPC and a transport cofactor concentration gradient across the nuclear envelope (GSP1 and GSP2 GTPases associated predominantly with GTP in the nucleus, with GDP in the cytoplasm). NUP145 is autocatalytically cleaved in vivo in 2 polypeptides which assume different functions in the NPC. NUP145N as one of the FG repeat nucleoporins participates in karyopherin interactions and contains part of the autocatalytic cleavage activity. NUP145C as part of the NUP84 complex is involved in nuclear poly(A)+ RNA and tRNA export. It is also required for normal NPC distribution (probably through interactions with MLP1 and MLP2) and NPC assembly, as well as for normal nuclear envelope organization. The sequence is that of Nucleoporin NUP145 (NUP145) from Saccharomyces cerevisiae (strain ATCC 204508 / S288c) (Baker's yeast).